The sequence spans 157 residues: Transcription elongation factor GreB (157 aa).

This sequence belongs to the GreA/GreB family. GreB subfamily.

In terms of biological role, necessary for efficient RNA polymerase transcription elongation past template-encoded arresting sites. The arresting sites in DNA have the property of trapping a certain fraction of elongating RNA polymerases that pass through, resulting in locked ternary complexes. Cleavage of the nascent transcript by cleavage factors such as GreA or GreB allows the resumption of elongation from the new 3'terminus. GreB releases sequences of up to 9 nucleotides in length. The sequence is that of Transcription elongation factor GreB from Salmonella typhi.